Here is a 331-residue protein sequence, read N- to C-terminus: Cytosolic arginine sensor for mTORC1 subunit 1 (331 aa).

Position 14 is a phosphoserine (Ser-14). 2 consecutive ACT domains span residues Ala-72–Ala-137 and Gly-259–Gln-320. L-arginine is bound by residues Ser-110 to Val-111, Gly-273, Ile-279 to Val-280, and Thr-299 to Asp-303.

The protein belongs to the GATS family. Forms homodimers and heterodimers with CASTOR2. Interacts with the GATOR2 complex which is composed of MIOS, SEC13, SEH1L, WDR24 and WDR59; the interaction is negatively regulated by arginine. Interacts with TM4SF5; the interaction is positively regulated by leucine and is negatively regulated by arginine. Post-translationally, phosphorylation at Ser-14 by AKT1, promoting the interaction between CASTOR1 and RNF167. Ubiquitinated by RNF167 via 'Lys-29'-polyubiquitination, leading to its degradation, releasing the GATOR2 complex. Ubiquitination by RNF167 is promoted by phosphorylation at Ser-14 by AKT1.

The protein localises to the cytoplasm. It is found in the cytosol. Its function is as follows. Functions as an intracellular arginine sensor within the amino acid-sensing branch of the TORC1 signaling pathway. As a homodimer or a heterodimer with CASTOR2, binds and inhibits the GATOR subcomplex GATOR2 and thereby mTORC1. Binding of arginine to CASTOR1 allosterically disrupts the interaction of CASTOR1-containing dimers with GATOR2 which can in turn activate mTORC1 and the TORC1 signaling pathway. In Mus musculus (Mouse), this protein is Cytosolic arginine sensor for mTORC1 subunit 1.